A 146-amino-acid chain; its full sequence is Holo-[acyl-carrier-protein] synthase (146 aa).

Mg(2+)-binding residues include Asp8 and Glu61.

Belongs to the P-Pant transferase superfamily. AcpS family. Mg(2+) serves as cofactor.

The protein resides in the cytoplasm. The enzyme catalyses apo-[ACP] + CoA = holo-[ACP] + adenosine 3',5'-bisphosphate + H(+). In terms of biological role, transfers the 4'-phosphopantetheine moiety from coenzyme A to a Ser of acyl-carrier-protein. This Rhodopseudomonas palustris (strain ATCC BAA-98 / CGA009) protein is Holo-[acyl-carrier-protein] synthase.